A 204-amino-acid chain; its full sequence is Protease (204 aa).

Catalysis depends on residues H54, D71, and C122.

Belongs to the peptidase C5 family. Interacts with protease cofactor pVI-C; this interaction is necessary for protease activation.

It localises to the virion. Its subcellular location is the host nucleus. It catalyses the reaction Cleaves proteins of the adenovirus and its host cell at two consensus sites: -Yaa-Xaa-Gly-Gly-|-Xaa- and -Yaa-Xaa-Gly-Xaa-|-Gly- (in which Yaa is Met, Ile or Leu, and Xaa is any amino acid).. Its activity is regulated as follows. Requires DNA and protease cofactor for maximal activation. Inside nascent virions, becomes partially activated by binding to the viral DNA, allowing it to cleave the cofactor that binds to the protease and fully activates it. Actin, like the viral protease cofactor, seems to act as a cofactor in the cleavage of cytokeratin 18 and of actin itself. Its function is as follows. Cleaves viral precursor proteins (pTP, pIIIa, pVI, pVII, pVIII, and pX) inside newly assembled particles giving rise to mature virions. Protease complexed to its cofactor slides along the viral DNA to specifically locate and cleave the viral precursors. Mature virions have a weakened organization compared to the unmature virions, thereby facilitating subsequent uncoating. Without maturation, the particle lacks infectivity and is unable to uncoat. Late in adenovirus infection, in the cytoplasm, may participate in the cytoskeleton destruction. Cleaves host cell cytoskeletal keratins K7 and K18. The sequence is that of Protease from Bos taurus (Bovine).